A 95-amino-acid polypeptide reads, in one-letter code: Large ribosomal subunit protein bL25 (95 aa).

It belongs to the bacterial ribosomal protein bL25 family. Part of the 50S ribosomal subunit; part of the 5S rRNA/L5/L18/L25 subcomplex. Contacts the 5S rRNA. Binds to the 5S rRNA independently of L5 and L18.

Functionally, this is one of the proteins that binds to the 5S RNA in the ribosome where it forms part of the central protuberance. The sequence is that of Large ribosomal subunit protein bL25 from Glaesserella parasuis serovar 5 (strain SH0165) (Haemophilus parasuis).